We begin with the raw amino-acid sequence, 78 residues long: Putative membrane protein insertion efficiency factor (78 aa).

The protein belongs to the UPF0161 family.

It localises to the cell inner membrane. Functionally, could be involved in insertion of integral membrane proteins into the membrane. The polypeptide is Putative membrane protein insertion efficiency factor (Prochlorococcus marinus subsp. pastoris (strain CCMP1986 / NIES-2087 / MED4)).